Reading from the N-terminus, the 213-residue chain is uncharacterized protein (213 aa).

Residues G53, E74, and D96 each coordinate S-adenosyl-L-methionine.

Belongs to the methyltransferase superfamily. YrrT family.

Could be a S-adenosyl-L-methionine-dependent methyltransferase. This is an uncharacterized protein from Oceanobacillus iheyensis (strain DSM 14371 / CIP 107618 / JCM 11309 / KCTC 3954 / HTE831).